Here is a 129-residue protein sequence, read N- to C-terminus: Large ribosomal subunit protein bL17 (129 aa).

This sequence belongs to the bacterial ribosomal protein bL17 family. In terms of assembly, part of the 50S ribosomal subunit. Contacts protein L32.

This is Large ribosomal subunit protein bL17 from Yersinia pseudotuberculosis serotype O:1b (strain IP 31758).